The following is a 288-amino-acid chain: Elongation factor Ts (288 aa).

The involved in Mg(2+) ion dislocation from EF-Tu stretch occupies residues Thr82 to Val85.

The protein belongs to the EF-Ts family.

The protein resides in the cytoplasm. Associates with the EF-Tu.GDP complex and induces the exchange of GDP to GTP. It remains bound to the aminoacyl-tRNA.EF-Tu.GTP complex up to the GTP hydrolysis stage on the ribosome. The polypeptide is Elongation factor Ts (Chlorobium phaeovibrioides (strain DSM 265 / 1930) (Prosthecochloris vibrioformis (strain DSM 265))).